The sequence spans 1313 residues: MSNYSCPRTHNKSNMSGRNEVKPISFSRGSFQIHHYSNSIHSPSLDGSPRQNFSQKYSFGSINSSNSSYDRSRDPSSVEQQLMREKSQALLKRKSSPMPKSSGLLYSTHTNKELSSIDKINDPSSNALICAGKAHLGYYKFSSNDNNKITLVHEFTQGFSSGSSQLNSLNPNLNKRRRQIKLSTIADVKSGFQKYNNYIAVCNNSTIISIYDINKNDNIDNPLVTSFSEHSRAVNSFDFNMTQTSLLISGGQDGQIKIWDLRSNSLSGSNKPDLNINAASDSIRDVKWMPGYNFSSFNQSYDGKQTGNSEYKFASIHDSGLLLKFDIRQPNQVEKKINAHTGPGLCLNWHPNQDYIATGGRDGKCCIWYIGDVVNDAPVTSLGSMTPNTLHTSNVNYYQSNATSLALPEMTINTGFPVTKLKFRPAYEKNVMDSLLAISSMGEEAEVNIYSLCRKFIPKHVLLTTSPSQGLVWWDKSLIFNTDRSNRINGWDIDLEPTVLDNLPKALATWRDIDGNGLLVIDQDSGTYTANEEYIPLVFDKRRRQSHRLLNPSINDNNSITKTKYLDSIKKANSNTIISPTSVEKTGNIKQPNLHSNKSIIGMTSPMYMTQFMPPTNSPSPLNEPLEFKGIQSPLIVALDFPHILNNMRLSKITSKKHLSKSSDIAAIKESPIQVFQYLARELEFSFSKDRKLDSRSSIIKRKSISDDSGSQVDVIKKIGFTDTTKWTNLINRKTDGEIAEKSSDRISALSTSSESIKNDIDEKSEHSKNNAYLNLEKKLSHGTHGMPEDAIEAQHKVDILIELVTICSHNASVYSYIDDVPNFKIWTLIKDSLLWDLKDITGIEEAINSNDSIEIKDKFQYFENLDHERALKNSSSQTQFSDIPSEIESFVTENPEALTSASLELDNDIEEGTKESKRPISNLQQQLKAENTAVMDTPSDVFVTATTDGGHFRDNSKVTRDENKIETNDNTNLLNIGKVNTENAIKIDSESVIEDVAPGSKSIEIPTLTRGRTRTSFIDTFMTNPLHNMERPDRSLLLAQDSAASLNDQSSPISKVSSIKSSSNVPHSLNSMIKLSQGKMHSRTRSIGKSPIKLSGFLSPKERSLSLPLENILKKNKSAEKVAHNDQFRPPWETGKLLKQLFNQAVETGNILLAINIITLFQDLYNITTIDVVKSSLLQFVEILHRYELFEIATALLKYCSWNNILEGNGGNSTVQLFCDKCGKLIVNEFSKTNFNEELKRTGNKDSMKKFGYWYCDACKKPNSLCVLCEKPMKKLVMCVLACGHEGHFQCLRDWFLNEGMNECPAGDIQVI.

Residues 1-17 (MSNYSCPRTHNKSNMSG) show a composition bias toward polar residues. 2 disordered regions span residues 1–22 (MSNY…NEVK) and 38–83 (NSIH…QQLM). Low complexity predominate over residues 57–69 (YSFGSINSSNSSY). Positions 70–83 (DRSRDPSSVEQQLM) are enriched in basic and acidic residues. WD repeat units follow at residues 180 to 221 (IKLS…NIDN), 229 to 269 (EHSR…LSGS), 339 to 378 (AHTG…NDAP), 442 to 484 (GEEA…NTDR), 711 to 752 (SQVD…ALST), 795 to 837 (QHKV…LLWD), 1100 to 1143 (SPKE…KQLF), and 1190 to 1229 (LFEI…LIVN). The segment at 1267–1309 (CVLCEKPMKKLVMCVLACGHEGHFQCLRDWFLNEGMNECPAGD) adopts an RING-type; degenerate zinc-finger fold.

This sequence belongs to the WD repeat RTC1 family.

The protein localises to the vacuole. Its function is as follows. May be involved in a process influencing telomere capping. In Vanderwaltozyma polyspora (strain ATCC 22028 / DSM 70294 / BCRC 21397 / CBS 2163 / NBRC 10782 / NRRL Y-8283 / UCD 57-17) (Kluyveromyces polysporus), this protein is Restriction of telomere capping protein 1 (RTC1).